A 345-amino-acid chain; its full sequence is Anthranilate phosphoribosyltransferase (345 aa).

5-phospho-alpha-D-ribose 1-diphosphate-binding positions include glycine 79, 82 to 83 (GD), threonine 87, 89 to 92 (NVST), 106 to 114 (KHGNRAVSG), and serine 118. Glycine 79 is an anthranilate binding site. Serine 91 is a Mg(2+) binding site. Anthranilate is bound at residue asparagine 109. Residue arginine 164 participates in anthranilate binding. Residues aspartate 223 and glutamate 224 each contribute to the Mg(2+) site.

It belongs to the anthranilate phosphoribosyltransferase family. Homodimer. It depends on Mg(2+) as a cofactor.

It carries out the reaction N-(5-phospho-beta-D-ribosyl)anthranilate + diphosphate = 5-phospho-alpha-D-ribose 1-diphosphate + anthranilate. It functions in the pathway amino-acid biosynthesis; L-tryptophan biosynthesis; L-tryptophan from chorismate: step 2/5. Catalyzes the transfer of the phosphoribosyl group of 5-phosphorylribose-1-pyrophosphate (PRPP) to anthranilate to yield N-(5'-phosphoribosyl)-anthranilate (PRA). The sequence is that of Anthranilate phosphoribosyltransferase from Saccharolobus islandicus (strain M.16.27) (Sulfolobus islandicus).